The chain runs to 138 residues: Large ribosomal subunit protein bL17 (138 aa).

Belongs to the bacterial ribosomal protein bL17 family. As to quaternary structure, part of the 50S ribosomal subunit. Contacts protein L32.

In Jannaschia sp. (strain CCS1), this protein is Large ribosomal subunit protein bL17.